Reading from the N-terminus, the 501-residue chain is Sucrose transport protein SUT2 (501 aa).

The Cytoplasmic portion of the chain corresponds to 1–31; it reads MPRRPSGGGGGAGPAAAAVRKVPLRKLLRAA. The chain crosses the membrane as a helical span at residues 32-52; that stretch reads SVACGVQFGWALQLSLLTPYV. Over 53–55 the chain is Extracellular; sequence QEL. The chain crosses the membrane as a helical span at residues 56–76; the sequence is GIPHAFASLVWLCGPLSGLLV. Over 77 to 98 the chain is Cytoplasmic; it reads QPLVGHLSDRIAPAASPLGRRR. A helical transmembrane segment spans residues 99–119; it reads PFIAAGAASIAAAVLTVGFSA. Over 120 to 135 the chain is Extracellular; it reads DLGRIFGDSITPGSTR. The chain crosses the membrane as a helical span at residues 136–156; that stretch reads LGAIIVYLVGFWLLDVGNNAT. At 157–176 the chain is on the cytoplasmic side; the sequence is QGPCRAFLADLTENDPRRTR. The chain crosses the membrane as a helical span at residues 177–197; sequence IANAYFSLFMALGNILGYATG. Topologically, residues 198-222 are extracellular; the sequence is AYSGWYKIFPFTVTPSCSISCANLK. Residues 223 to 243 form a helical membrane-spanning segment; sequence SAFLLDIIILVVTTCITVASV. At 244–278 the chain is on the cytoplasmic side; sequence QEPQSFGSDEADHPSTEQEAFLWELFGSFRYFTLP. Residues 279–299 form a helical membrane-spanning segment; it reads VWMVLIVTALTWIGWFPFILF. Topologically, residues 300–327 are extracellular; that stretch reads DTDWMGREIYRGSPDDPSITQSYHDGVR. A helical transmembrane segment spans residues 328 to 348; the sequence is MGSFGLMLNSVLLGFTSIVLE. The Cytoplasmic segment spans residues 349–356; the sequence is KLCRKWGA. The chain crosses the membrane as a helical span at residues 357–377; sequence GLVWGVSNILMALCFVAMLVI. The Extracellular portion of the chain corresponds to 378–394; sequence TYVAKNMDYPPSGVPPT. Residues 395 to 415 traverse the membrane as a helical segment; sequence GIVIASLVVFTILGAPLAITY. Residues 416–433 lie on the Cytoplasmic side of the membrane; the sequence is SIPYAMAASRVENLGLGQ. Residues 434–454 form a helical membrane-spanning segment; it reads GLAMGILNLAIVIPQVIVSLG. Topologically, residues 455 to 467 are extracellular; it reads SGPWDQLFGGGNA. A helical membrane pass occupies residues 468–488; sequence PAFAVAAAASFIGGLVAILGL. Over 489-501 the chain is Cytoplasmic; that stretch reads PRARIASRRRGHR.

Belongs to the glycoside-pentoside-hexuronide (GPH) cation symporter transporter (TC 2.A.2.4) family. As to quaternary structure, homodimer. As to expression, widely expressed.

Its subcellular location is the cell membrane. Its pathway is glycan biosynthesis; sucrose metabolism. In terms of biological role, responsible for the transport of sucrose into the cell, with the concomitant uptake of protons (symport system). May also transport other glucosides. The protein is Sucrose transport protein SUT2 (SUT2) of Oryza sativa subsp. japonica (Rice).